A 6548-amino-acid polypeptide reads, in one-letter code: Epiplakin (6548 aa).

The residue at position 33 (threonine 33) is a Phosphothreonine. Plectin repeat units lie at residues 41-78 (AALP…TGLG), 79-116 (LTLL…LELK), 117-154 (EKLL…RTLG), 155-192 (WRLL…KETW), 285-322 (RRYL…KGIA), 323-360 (LQLL…PELH), 362-398 (QLLV…QPLA), 399-436 (LRLL…EETR), and 437-470 (QRLS…PETG). An interaction with KRT5 region spans residues 49–1123 (SIAGVYVEAS…KASGLHLLPL (1075 aa)). Positions 545–565 (SVEELAAELKNIVEQAAATAK) form a coiled coil. Plectin repeat units lie at residues 611 to 648 (QRYL…PGTA), 649 to 686 (LILL…PDVY), 687 to 724 (AKLL…RDHG), 725 to 762 (IRLL…QILN), and 766 to 800 (LDPS…SETG). The stretch at 851-886 (TEDRRRQLLQRYRQRKITLEQVTQLLEKEMRRWTDI) forms a coiled coil. 8 Plectin repeats span residues 931-968 (HRYL…PSTA), 969-1006 (LALL…AEVY), 1007-1044 (GKLK…VEQA), 1224-1284 (QETL…TGLG), 1285-1322 (QQLL…MEQS), 1323-1360 (EHLR…QSEA), 1361-1398 (FPLL…EQTS), and 1402-1436 (TATG…ADTG). Phosphothreonine is present on threonine 1551. 5 Plectin repeats span residues 1572–1609 (RRSL…PGTA), 1610–1647 (LVLL…KETY), 1648–1685 (MKLL…RDHG), 1686–1723 (IRLL…EEMN), and 1727–1761 (SDPS…PETG). The interaction with KRT5 stretch occupies residues 1580 to 6545 (FIAGVLIQDT…PETGLLFLSL (4966 aa)). Residues 1819 to 1851 (RKLLREYRAQNIGLENLLEVITSTVEETEKQSQ) are a coiled coil. Plectin repeat units follow at residues 1898–1935 (RVYL…AGFA), 1936–1973 (AQML…EDLR), 1974–2011 (ERLV…REEA), 2012–2049 (LRLL…DDSL), 2225–2267 (KRYL…PGTA), 2268–2305 (LVLL…GEIQ), 2306–2343 (EKLL…RDHG), 2344–2381 (IRLL…EDMN), and 2385–2419 (ADPG…PETG). Phosphoserine occurs at positions 2430 and 2508. Residues 2578 to 2626 (AEETQESKPKPRDASLKQQDTGARGSGTSPDEGDAQDSSESARQQQEQT) form a disordered region. Residues 2582–2592 (QESKPKPRDAS) are compositionally biased toward basic and acidic residues. Composition is skewed to polar residues over residues 2593 to 2606 (LKQQ…SGTS) and 2615 to 2626 (SSESARQQQEQT). Plectin repeat units follow at residues 2740-2782 (KRYL…PGTA), 2783-2820 (LVLL…GEIQ), 2821-2858 (EKLL…RDHG), 2859-2896 (IRLL…EDMN), and 2900-2934 (ADPG…PETG). Residues 2748–2940 (CIAGVLVPVQ…PETGFYMLQL (193 aa)) form an interaction with KRT14 region. The disordered stretch occupies residues 3093–3144 (AEETQESKPKPRDASLKQQDTGARGSGTSPDEGDAQDSSESARQQQEQTLRA). Positions 3097-3107 (QESKPKPRDAS) are enriched in basic and acidic residues. 2 stretches are compositionally biased toward polar residues: residues 3108–3121 (LKQQ…SGTS) and 3130–3144 (SSES…TLRA). A Phosphoserine modification is found at serine 3220. Plectin repeat units lie at residues 3255–3297 (KRYL…PGTA), 3298–3335 (LVLL…GEIQ), 3336–3373 (EKLL…RDHG), 3374–3411 (IRLL…EDMN), and 3415–3449 (ADPG…PETG). Serine 3460 and serine 3538 each carry phosphoserine. Residues 3608–3659 (AEETQESKPKPRDASLKQQDTGARGSGTSPDEGDAQDSSESARQQQEQTLRA) form a disordered region. The segment covering 3612-3622 (QESKPKPRDAS) has biased composition (basic and acidic residues). Polar residues-rich tracts occupy residues 3623–3636 (LKQQ…SGTS) and 3645–3659 (SSES…TLRA). A Phosphoserine modification is found at serine 3735. Plectin repeat units follow at residues 3770–3812 (KRYL…PGTA), 3813–3850 (LVLL…GEIQ), 3851–3888 (EKLL…RDHG), 3889–3926 (IRLL…EDMN), and 3930–3964 (ADPG…PETG). A phosphoserine mark is found at serine 3975 and serine 4053. Positions 4123 to 4174 (AEETQESKPKPRDASLKQQDTGARGSGTSPDEGDAQDSSESARQQQEQTLRA) are disordered. Residues 4127 to 4137 (QESKPKPRDAS) show a composition bias toward basic and acidic residues. Polar residues-rich tracts occupy residues 4138–4151 (LKQQ…SGTS) and 4160–4174 (SSES…TLRA). Plectin repeat units follow at residues 4285–4327 (KRYL…PGTA), 4328–4365 (LVLL…GEIQ), 4366–4403 (EKLL…RDHG), 4404–4441 (IRLL…EDMN), and 4445–4479 (ADPG…PETG). Residues 4638-4689 (AEETQESKPKPRDASLKQQDTGARGSGTSPDEGDAQDSSESARQQQEQTLRA) are disordered. Basic and acidic residues predominate over residues 4642 to 4652 (QESKPKPRDAS). Polar residues-rich tracts occupy residues 4653–4666 (LKQQ…SGTS) and 4675–4689 (SSES…TLRA). Position 4765 is a phosphoserine (serine 4765). 5 Plectin repeats span residues 4800–4842 (KRYL…PGTA), 4843–4880 (LVLL…GEIQ), 4881–4918 (EKLL…RDHG), 4919–4956 (IRLL…EDMN), and 4960–4994 (ADPG…PETG). Residues serine 5005 and serine 5083 each carry the phosphoserine modification. The disordered stretch occupies residues 5153 to 5204 (AEETQESKPKPRDASLKQQDTGARGSGTSPDEGDAQDSSESARQQQEQTLRA). A compositionally biased stretch (basic and acidic residues) spans 5157 to 5167 (QESKPKPRDAS). Composition is skewed to polar residues over residues 5168-5181 (LKQQ…SGTS) and 5190-5204 (SSES…TLRA). Plectin repeat units follow at residues 5315–5357 (KRYL…PGTA), 5358–5395 (LVLL…GEIQ), 5396–5433 (EKLL…RDHG), 5434–5471 (IRLL…EDMN), and 5475–5509 (ADPG…PETG). The disordered stretch occupies residues 5668–5719 (AEETQESKPKPRDASLKQQDTGARGSGTSPDEGDAQDSSESARQQQEQTLRA). Basic and acidic residues predominate over residues 5672 to 5682 (QESKPKPRDAS). Composition is skewed to polar residues over residues 5683–5696 (LKQQ…SGTS) and 5705–5719 (SSES…TLRA). Serine 5795 carries the phosphoserine modification. Plectin repeat units lie at residues 5830 to 5872 (KRYL…PGTA), 5873 to 5910 (LVLL…GEIQ), 5911 to 5948 (EKLL…RDHG), 5949 to 5986 (IRLL…EDMN), and 5990 to 6024 (ADPG…PETG). Phosphoserine is present on residues serine 6035 and serine 6113. The tract at residues 6183-6234 (AEETQESKPKPRDASLKQQDTGARGSGTSPDEGDAQDSSESARQQQEQTLRA) is disordered. Basic and acidic residues predominate over residues 6187 to 6197 (QESKPKPRDAS). 2 stretches are compositionally biased toward polar residues: residues 6198-6211 (LKQQ…SGTS) and 6220-6234 (SSES…TLRA). Residue serine 6310 is modified to Phosphoserine. Plectin repeat units follow at residues 6345–6387 (KRYL…PGTA), 6388–6425 (LVLL…GEIQ), 6426–6463 (EKLL…KNHG), 6464–6501 (IRLL…QEMN), and 6505–6539 (ADPG…PETG).

This sequence belongs to the plakin or cytolinker family. As to quaternary structure, interacts with KRT5, KRT14 and KRT5/KRT14 heterotetramer; interacts preferentially with assembled filaments rather than keratin monomers. Interacts with KRT8 and KRT18 and KRT8/KRT18 heterotetramer; interacts preferentially with assembled filaments rather than keratin monomers. Interacts with KRT1, VIM and DES; interaction is stronger with KRT1 than with VIM or DES; interaction is dependent of higher-order structure of intermediate filament. High levels in skin, small intestine and salivary gland. Lower levels in lung, uterus and liver. Not detected in brain, kidney, muscle, heart or spleen. In skin, expressed in all epidermal layers but not in the dermis. In intestine, expressed exclusively in the epithelial cell layer of the villi. In liver, expressed at hepatocyte margins. Around the region of the wound, expressed in the upper half of the epidermis. Weakly expressed on the basilar side of the suprabasal layer of the epidermis at the wound's edge. Expressed strongly in the upper layer of the epidermis, especially in larger keratinocytes. Expressed in undifferentiated primary keratinocytes. Strongly expressed in ductal cells, and also expressed in acinar cells. Expressed in hepatocytes and cholangiocytes.

The protein localises to the cytoplasm. It is found in the cytoskeleton. Its subcellular location is the apicolateral cell membrane. The protein resides in the basolateral cell membrane. It localises to the cell junction. The protein localises to the hemidesmosome. It is found in the tight junction. Its subcellular location is the cell projection. Cytoskeletal linker protein that connects to intermediate filaments and controls their reorganization in response to stress. In response to mechanical stress like wound healing, is associated with the machinery for cellular motility by slowing down keratinocyte migration and proliferation and accelerating keratin bundling in proliferating keratinocytes thus contributing to tissue architecture. However in wound healing in corneal epithelium also positively regulates cell differentiation and proliferation and negatively regulates migration thereby controlling corneal epithelium morphogenesis and integrity. In response to cellular stress, plays a role in keratin filament reorganization, probably by protecting keratin filaments against disruption. During liver and pancreas injuries, plays a protective role by chaperoning disease-induced intermediate filament reorganization. This Mus musculus (Mouse) protein is Epiplakin.